Here is a 250-residue protein sequence, read N- to C-terminus: Imidazole glycerol phosphate synthase subunit HisF (250 aa).

Catalysis depends on residues aspartate 11 and aspartate 130.

The protein belongs to the HisA/HisF family. In terms of assembly, heterodimer of HisH and HisF.

The protein resides in the cytoplasm. The catalysed reaction is 5-[(5-phospho-1-deoxy-D-ribulos-1-ylimino)methylamino]-1-(5-phospho-beta-D-ribosyl)imidazole-4-carboxamide + L-glutamine = D-erythro-1-(imidazol-4-yl)glycerol 3-phosphate + 5-amino-1-(5-phospho-beta-D-ribosyl)imidazole-4-carboxamide + L-glutamate + H(+). Its pathway is amino-acid biosynthesis; L-histidine biosynthesis; L-histidine from 5-phospho-alpha-D-ribose 1-diphosphate: step 5/9. IGPS catalyzes the conversion of PRFAR and glutamine to IGP, AICAR and glutamate. The HisF subunit catalyzes the cyclization activity that produces IGP and AICAR from PRFAR using the ammonia provided by the HisH subunit. This is Imidazole glycerol phosphate synthase subunit HisF from Bacteroides fragilis (strain YCH46).